A 634-amino-acid polypeptide reads, in one-letter code: AAl-toxin cluster-specific transcription factor ALT13 (634 aa).

Residues 30–56 (CENCKRRKVRCSGANPCEQCLKVNVHC) constitute a DNA-binding region (zn(2)-C6 fungal-type). Residues 66–89 (RRSVPNSGADKNNQQGDTDRHNGA) are disordered. Polar residues predominate over residues 69–81 (VPNSGADKNNQQG).

The protein resides in the nucleus. Its function is as follows. Transcription factor that regulates the expression of the gene cluster that mediates the biosynthesis of AAL-toxins, sphinganine-analog mycotoxins responsible for Alternaria stem canker on tomato by the tomato pathotype. This is AAl-toxin cluster-specific transcription factor ALT13 from Alternaria alternata (Alternaria rot fungus).